The following is a 547-amino-acid chain: Membrane protein insertase YidC (547 aa).

6 consecutive transmembrane segments (helical) span residues 6–26 (LILV…WQKY), 328–348 (VVDY…LEAI), 351–371 (LVGN…AVFF), 425–445 (LPIL…LGAV), 459–479 (LASA…MFVQ), and 499–519 (PLIF…YWVV).

The protein belongs to the OXA1/ALB3/YidC family. Type 1 subfamily. As to quaternary structure, interacts with the Sec translocase complex via SecD. Specifically interacts with transmembrane segments of nascent integral membrane proteins during membrane integration.

Its subcellular location is the cell inner membrane. Functionally, required for the insertion and/or proper folding and/or complex formation of integral membrane proteins into the membrane. Involved in integration of membrane proteins that insert both dependently and independently of the Sec translocase complex, as well as at least some lipoproteins. Aids folding of multispanning membrane proteins. The protein is Membrane protein insertase YidC of Dechloromonas aromatica (strain RCB).